Reading from the N-terminus, the 1090-residue chain is Telomerase reverse transcriptase (1090 aa).

The segment at 184–301 (GFLLRPPSRK…PLEGGPSWRS (118 aa)) is disordered. Positions 190 to 204 (PSRKHKSFQVGKKTR) are enriched in basic residues. Composition is skewed to basic and acidic residues over residues 218–232 (EESR…EVST) and 252–262 (HHEERRQHEAV). The segment covering 281-294 (KPPPETSAAPPPLE) has biased composition (pro residues). The TFLY; involved in RNA binding motif lies at 316–321 (TLGFLY). Interaction with RNA template regions lie at residues 371–376 (LPLRYF) and 477–503 (WKIK…ELAY). One can recognise a Reverse transcriptase domain in the interval 569–893 (SPAQVASLPK…CLFPWCGLLL (325 aa)). 3 residues coordinate Mg(2+): Asp-666, Asp-826, and Asp-827.

It belongs to the reverse transcriptase family. Telomerase subfamily. In terms of assembly, catalytic subunit of the telomerase holoenzyme complex composed minimally of TERT and the telomerase RNA template component (TERC). As to expression, expressed at highest levels in gonads and brain, and at lower levels in heart, spleen, kidney, gill, muscle and skin. Detected in embryonic stem cell lines before and after differentiation. Isoform F is expressed in gonads, with higher levels in testis relative to ovary, but is not detected in other tissues. Isoform B is expressed predominantly in testis. Isoform C is up-regulated in embryonic stem cell lines after differentiation.

The protein localises to the nucleus. It is found in the chromosome. Its subcellular location is the telomere. The catalysed reaction is DNA(n) + a 2'-deoxyribonucleoside 5'-triphosphate = DNA(n+1) + diphosphate. Telomerase is a ribonucleoprotein enzyme essential for the replication of chromosome termini in most eukaryotes. It elongates telomeres. It is a reverse transcriptase that adds simple sequence repeats to chromosome ends by copying a template sequence within the RNA component of the enzyme. In Oryzias latipes (Japanese rice fish), this protein is Telomerase reverse transcriptase.